The following is a 78-amino-acid chain: Xibalbin-13 1 (78 aa).

The signal sequence occupies residues 1–27 (MKEANTRRYIHLCLVVVLVSTIITTEA). Positions 28–31 (EDDR) are excised as a propeptide. Cystine bridges form between cysteine 34–cysteine 49, cysteine 41–cysteine 54, cysteine 48–cysteine 65, and cysteine 56–cysteine 63. Position 76 is a serine amide (serine 76).

It belongs to the xibalbin-13 family. Expressed by the venom gland.

It is found in the secreted. In terms of biological role, probable neurotoxin. Strongly inhibits voltage-gated potassium channels (Kv1.1/KCNA1, Kv1.2/KCNA2, Kv1.3/KCNA3, and Kv1.6/KCNA6) and mildly inhibits sodium channels (Nav1.2/SCN2A, Nav1.4/SCN4A, Nav1.5/SCN5A, Nav1.6/SCN8A, and BgNav). Induces activation of protein kinase A type II (PKA-II) and MAP kinase Erk1/2 in primary nociceptive and non-nociceptive sensory neurons. Does not show cytotoxic activity. Does not have an impact on Ca2+, cAMP, and NO signaling in the cell types analyzed. Does not interfere with the adhesion of leukocytes to endothelial cells. This is Xibalbin-13 1 from Xibalbanus tulumensis (Blind cave remipede).